A 436-amino-acid polypeptide reads, in one-letter code: Chorion-specific transcription factor GCMa (436 aa).

Positions 14-169 (LSWDINDVKL…KLEAEARRAM (156 aa)) form a DNA-binding region, GCM. Residues Cys76, Cys82, Cys86, Cys113, Cys116, Cys125, His152, and His154 each coordinate Zn(2+). The interval 171–202 (KVNTAPSSVSLSLKGSTETRSLPGETQSQGSL) is disordered. Positions 174–202 (TAPSSVSLSLKGSTETRSLPGETQSQGSL) are enriched in polar residues.

Polyubiquitinated in the presence of UBE2D2 and FBXW2 (in vitro). In terms of tissue distribution, highly expressed in the placenta. Expressed in trophoblast cells of the villi.

The protein resides in the nucleus. Transcription factor involved in the control of expression of placental growth factor (PGF) and other placenta-specific genes. Binds to the trophoblast-specific element 2 (TSE2) of the aromatase gene enhancer. Binds to the SYDE1 promoter. Has a central role in mediating the differentiation of trophoblast cells along both the villous and extravillous pathways in placental development. This is Chorion-specific transcription factor GCMa (GCM1) from Homo sapiens (Human).